The following is a 156-amino-acid chain: D-aminoacyl-tRNA deacylase (156 aa).

The Gly-cisPro motif, important for rejection of L-amino acids signature appears at 142-143 (GP).

Belongs to the DTD family. In terms of assembly, homodimer.

The protein resides in the cytoplasm. The enzyme catalyses glycyl-tRNA(Ala) + H2O = tRNA(Ala) + glycine + H(+). It carries out the reaction a D-aminoacyl-tRNA + H2O = a tRNA + a D-alpha-amino acid + H(+). In terms of biological role, an aminoacyl-tRNA editing enzyme that deacylates mischarged D-aminoacyl-tRNAs. Also deacylates mischarged glycyl-tRNA(Ala), protecting cells against glycine mischarging by AlaRS. Acts via tRNA-based rather than protein-based catalysis; rejects L-amino acids rather than detecting D-amino acids in the active site. By recycling D-aminoacyl-tRNA to D-amino acids and free tRNA molecules, this enzyme counteracts the toxicity associated with the formation of D-aminoacyl-tRNA entities in vivo and helps enforce protein L-homochirality. This is D-aminoacyl-tRNA deacylase from Cupriavidus pinatubonensis (strain JMP 134 / LMG 1197) (Cupriavidus necator (strain JMP 134)).